The sequence spans 210 residues: Leucyl/phenylalanyl-tRNA--protein transferase (210 aa).

This sequence belongs to the L/F-transferase family.

The protein localises to the cytoplasm. The enzyme catalyses N-terminal L-lysyl-[protein] + L-leucyl-tRNA(Leu) = N-terminal L-leucyl-L-lysyl-[protein] + tRNA(Leu) + H(+). It carries out the reaction N-terminal L-arginyl-[protein] + L-leucyl-tRNA(Leu) = N-terminal L-leucyl-L-arginyl-[protein] + tRNA(Leu) + H(+). It catalyses the reaction L-phenylalanyl-tRNA(Phe) + an N-terminal L-alpha-aminoacyl-[protein] = an N-terminal L-phenylalanyl-L-alpha-aminoacyl-[protein] + tRNA(Phe). In terms of biological role, functions in the N-end rule pathway of protein degradation where it conjugates Leu, Phe and, less efficiently, Met from aminoacyl-tRNAs to the N-termini of proteins containing an N-terminal arginine or lysine. The protein is Leucyl/phenylalanyl-tRNA--protein transferase of Roseobacter denitrificans (strain ATCC 33942 / OCh 114) (Erythrobacter sp. (strain OCh 114)).